We begin with the raw amino-acid sequence, 317 residues long: Ribosomal protein L11 methyltransferase (317 aa).

4 residues coordinate S-adenosyl-L-methionine: Thr-162, Gly-183, Asp-205, and Asn-248.

It belongs to the methyltransferase superfamily. PrmA family.

It localises to the cytoplasm. It carries out the reaction L-lysyl-[protein] + 3 S-adenosyl-L-methionine = N(6),N(6),N(6)-trimethyl-L-lysyl-[protein] + 3 S-adenosyl-L-homocysteine + 3 H(+). Its function is as follows. Methylates ribosomal protein L11. The chain is Ribosomal protein L11 methyltransferase from Alkaliphilus metalliredigens (strain QYMF).